Here is a 177-residue protein sequence, read N- to C-terminus: ATP synthase subunit delta (177 aa).

This sequence belongs to the ATPase delta chain family. In terms of assembly, F-type ATPases have 2 components, F(1) - the catalytic core - and F(0) - the membrane proton channel. F(1) has five subunits: alpha(3), beta(3), gamma(1), delta(1), epsilon(1). F(0) has three main subunits: a(1), b(2) and c(10-14). The alpha and beta chains form an alternating ring which encloses part of the gamma chain. F(1) is attached to F(0) by a central stalk formed by the gamma and epsilon chains, while a peripheral stalk is formed by the delta and b chains.

It is found in the cell inner membrane. F(1)F(0) ATP synthase produces ATP from ADP in the presence of a proton or sodium gradient. F-type ATPases consist of two structural domains, F(1) containing the extramembraneous catalytic core and F(0) containing the membrane proton channel, linked together by a central stalk and a peripheral stalk. During catalysis, ATP synthesis in the catalytic domain of F(1) is coupled via a rotary mechanism of the central stalk subunits to proton translocation. Its function is as follows. This protein is part of the stalk that links CF(0) to CF(1). It either transmits conformational changes from CF(0) to CF(1) or is implicated in proton conduction. The sequence is that of ATP synthase subunit delta from Proteus mirabilis (strain HI4320).